A 366-amino-acid polypeptide reads, in one-letter code: DNA replication and repair protein RecF (366 aa).

30–37 (GRNAQGKT) lines the ATP pocket.

Belongs to the RecF family.

Its subcellular location is the cytoplasm. Its function is as follows. The RecF protein is involved in DNA metabolism; it is required for DNA replication and normal SOS inducibility. RecF binds preferentially to single-stranded, linear DNA. It also seems to bind ATP. This Streptococcus thermophilus (strain CNRZ 1066) protein is DNA replication and repair protein RecF.